A 360-amino-acid polypeptide reads, in one-letter code: Probable dual-specificity RNA methyltransferase RlmN (360 aa).

Catalysis depends on E91, which acts as the Proton acceptor. One can recognise a Radical SAM core domain in the interval 97–335 (QHYGQSVCVT…CVVRQEHGTD (239 aa)). C104 and C340 are disulfide-bonded. Residues C111, C115, and C118 each coordinate [4Fe-4S] cluster. Residues 163 to 164 (GE), S195, 218 to 220 (SLH), and N296 contribute to the S-adenosyl-L-methionine site. C340 acts as the S-methylcysteine intermediate in catalysis.

This sequence belongs to the radical SAM superfamily. RlmN family. [4Fe-4S] cluster is required as a cofactor.

It localises to the cytoplasm. It carries out the reaction adenosine(2503) in 23S rRNA + 2 reduced [2Fe-2S]-[ferredoxin] + 2 S-adenosyl-L-methionine = 2-methyladenosine(2503) in 23S rRNA + 5'-deoxyadenosine + L-methionine + 2 oxidized [2Fe-2S]-[ferredoxin] + S-adenosyl-L-homocysteine. It catalyses the reaction adenosine(37) in tRNA + 2 reduced [2Fe-2S]-[ferredoxin] + 2 S-adenosyl-L-methionine = 2-methyladenosine(37) in tRNA + 5'-deoxyadenosine + L-methionine + 2 oxidized [2Fe-2S]-[ferredoxin] + S-adenosyl-L-homocysteine. Functionally, specifically methylates position 2 of adenine 2503 in 23S rRNA and position 2 of adenine 37 in tRNAs. The polypeptide is Probable dual-specificity RNA methyltransferase RlmN (Streptococcus equi subsp. equi (strain 4047)).